A 49-amino-acid polypeptide reads, in one-letter code: Large ribosomal subunit protein bL33 (49 aa).

It belongs to the bacterial ribosomal protein bL33 family.

The protein is Large ribosomal subunit protein bL33 of Lactobacillus acidophilus (strain ATCC 700396 / NCK56 / N2 / NCFM).